We begin with the raw amino-acid sequence, 464 residues long: Protein FAM90A24 (464 aa).

3 disordered regions span residues 1 to 42 (MMAR…DPRL), 69 to 389 (VPAT…HDGA), and 415 to 437 (HSPE…SEAP). 2 stretches are compositionally biased toward basic and acidic residues: residues 74–89 (GKKE…KPRG) and 97–114 (NKDK…DPQR). The span at 180–197 (LASLSPLRKASLSSSSSL) shows a compositional bias: low complexity.

It belongs to the FAM90 family.

This is Protein FAM90A24 from Homo sapiens (Human).